Consider the following 463-residue polypeptide: ATP synthase subunit beta (463 aa).

ATP is bound at residue 151-158 (GGAGVGKT).

This sequence belongs to the ATPase alpha/beta chains family. In terms of assembly, F-type ATPases have 2 components, CF(1) - the catalytic core - and CF(0) - the membrane proton channel. CF(1) has five subunits: alpha(3), beta(3), gamma(1), delta(1), epsilon(1). CF(0) has three main subunits: a(1), b(2) and c(9-12). The alpha and beta chains form an alternating ring which encloses part of the gamma chain. CF(1) is attached to CF(0) by a central stalk formed by the gamma and epsilon chains, while a peripheral stalk is formed by the delta and b chains.

It is found in the cell membrane. The catalysed reaction is ATP + H2O + 4 H(+)(in) = ADP + phosphate + 5 H(+)(out). Its function is as follows. Produces ATP from ADP in the presence of a proton gradient across the membrane. The catalytic sites are hosted primarily by the beta subunits. This is ATP synthase subunit beta from Clostridium botulinum (strain ATCC 19397 / Type A).